We begin with the raw amino-acid sequence, 695 residues long: FMR1-interacting protein NUFIP2 (695 aa).

Positions 1–100 (MEEKPGQPQP…KTGYGELNGN (100 aa)) are disordered. Basic residues-rich tracts occupy residues 11–23 (QHHH…HHHP) and 30–53 (PHHH…HHQQ). Lys78 participates in a covalent cross-link: Glycyl lysine isopeptide (Lys-Gly) (interchain with G-Cter in SUMO2). Thr87 is modified (phosphothreonine). Lys109 is covalently cross-linked (Glycyl lysine isopeptide (Lys-Gly) (interchain with G-Cter in SUMO2)). Ser112 and Ser113 each carry phosphoserine. Glycyl lysine isopeptide (Lys-Gly) (interchain with G-Cter in SUMO2) cross-links involve residues Lys136, Lys146, Lys157, and Lys171. Disordered regions lie at residues 155–189 (IQKN…IPNG), 204–234 (GKGA…AKGC), 261–341 (FKPD…KPPP), and 369–402 (TIQN…SQVP). Residues 159-182 (SMDKKNGKSYENKSGENQSVDKSD) are compositionally biased toward basic and acidic residues. A phosphoserine mark is found at Ser212 and Ser214. Tyr218 bears the Phosphotyrosine mark. A phosphothreonine mark is found at Thr219 and Thr220. The segment covering 221-230 (PKKRKARRNS) has biased composition (basic residues). A compositionally biased stretch (basic and acidic residues) spans 261-275 (FKPDYSEQKGNRVDG). Glycyl lysine isopeptide (Lys-Gly) (interchain with G-Cter in SUMO2) cross-links involve residues Lys262 and Lys281. Residue Arg291 is modified to Omega-N-methylarginine. Lys293 participates in a covalent cross-link: Glycyl lysine isopeptide (Lys-Gly) (interchain with G-Cter in SUMO2). Phosphoserine is present on Ser304. Lys307 participates in a covalent cross-link: Glycyl lysine isopeptide (Lys-Gly) (interchain with G-Cter in SUMO2). The span at 373 to 396 (SSVSPTSSSSSSSSTGETQTQSSS) shows a compositional bias: low complexity. Ser376 carries the post-translational modification Phosphoserine. Thr571 bears the Phosphothreonine mark. Phosphoserine is present on residues Ser572, Ser592, Ser608, and Ser629. Phosphothreonine is present on Thr633. A phosphoserine mark is found at Ser637, Ser652, Ser655, and Ser692.

As to quaternary structure, interacts with FMR1 (via N-terminus). Interacts with DDX6.

It localises to the nucleus. The protein resides in the cytoplasm. Its subcellular location is the stress granule. Binds RNA. The protein is FMR1-interacting protein NUFIP2 of Homo sapiens (Human).